The following is a 1285-amino-acid chain: ABC-type transporter fsqE (1285 aa).

Positions Val54 to Ser343 constitute an ABC transmembrane type-1 1 domain. The next 6 helical transmembrane spans lie at Ile57–Val77, Leu102–Phe122, Leu176–Met196, Ile203–Val223, Val281–Trp301, and Met312–Ile332. Residues Leu380–Lys622 enclose the ABC transporter 1 domain. Residue Gly413 to Ser420 participates in ATP binding. The N-linked (GlcNAc...) asparagine glycan is linked to Asn467. Residues Asp627 to Asn654 form a disordered region. 6 helical membrane-spanning segments follow: residues Leu707–Phe727, Gly753–Leu773, Gly831–Trp851, Leu855–Leu875, Ile931–Leu951, and Phe968–Phe988. Positions Ala713–Lys996 constitute an ABC transmembrane type-1 2 domain. Asn1037 is a glycosylation site (N-linked (GlcNAc...) asparagine). The 239-residue stretch at Val1043–Met1281 folds into the ABC transporter 2 domain. Gly1078–Ser1085 lines the ATP pocket. Asn1138 is a glycosylation site (N-linked (GlcNAc...) asparagine).

The protein belongs to the ABC transporter superfamily. ABCB family. Multidrug resistance exporter (TC 3.A.1.201) subfamily.

It is found in the membrane. Its pathway is secondary metabolite biosynthesis. In terms of biological role, ABC-type transporter; part of the gene cluster that mediates the biosynthesis of the isoquinoline alkaloids fumisoquin A, fumisoquin B and fumisoquin C; as well as small amounts of fumipyrrole as a shunt metabolite. The products of the cluster lead to a brown coloration and are important for growth and conidiation. FsqE possibly plays a role of self-protection. This chain is ABC-type transporter fsqE, found in Aspergillus fumigatus (strain ATCC MYA-4609 / CBS 101355 / FGSC A1100 / Af293) (Neosartorya fumigata).